Here is a 258-residue protein sequence, read N- to C-terminus: Thiazole synthase (258 aa).

Lys98 acts as the Schiff-base intermediate with DXP in catalysis. 1-deoxy-D-xylulose 5-phosphate contacts are provided by residues Gly159, 185-186, and 207-208; these read AG and NT.

This sequence belongs to the ThiG family. In terms of assembly, homotetramer. Forms heterodimers with either ThiH or ThiS.

It localises to the cytoplasm. The catalysed reaction is [ThiS sulfur-carrier protein]-C-terminal-Gly-aminoethanethioate + 2-iminoacetate + 1-deoxy-D-xylulose 5-phosphate = [ThiS sulfur-carrier protein]-C-terminal Gly-Gly + 2-[(2R,5Z)-2-carboxy-4-methylthiazol-5(2H)-ylidene]ethyl phosphate + 2 H2O + H(+). Its pathway is cofactor biosynthesis; thiamine diphosphate biosynthesis. In terms of biological role, catalyzes the rearrangement of 1-deoxy-D-xylulose 5-phosphate (DXP) to produce the thiazole phosphate moiety of thiamine. Sulfur is provided by the thiocarboxylate moiety of the carrier protein ThiS. In vitro, sulfur can be provided by H(2)S. The sequence is that of Thiazole synthase from Bacillus cereus (strain ATCC 14579 / DSM 31 / CCUG 7414 / JCM 2152 / NBRC 15305 / NCIMB 9373 / NCTC 2599 / NRRL B-3711).